Here is a 121-residue protein sequence, read N- to C-terminus: Phosphoribosyl-ATP pyrophosphatase (121 aa).

This sequence belongs to the PRA-PH family.

It localises to the cytoplasm. The enzyme catalyses 1-(5-phospho-beta-D-ribosyl)-ATP + H2O = 1-(5-phospho-beta-D-ribosyl)-5'-AMP + diphosphate + H(+). Its pathway is amino-acid biosynthesis; L-histidine biosynthesis; L-histidine from 5-phospho-alpha-D-ribose 1-diphosphate: step 2/9. The polypeptide is Phosphoribosyl-ATP pyrophosphatase (Burkholderia ambifaria (strain MC40-6)).